The chain runs to 27 residues: Vasotocin-neurophysin VT (27 aa).

A disulfide bridge links cysteine 1 with cysteine 6. Glycine amide is present on glycine 9.

It belongs to the vasopressin/oxytocin family.

Its function is as follows. Vasotocin is an antidiuretic hormone. In Sclerophrys regularis (Common African toad), this protein is Vasotocin-neurophysin VT.